The following is a 512-amino-acid chain: Protein disulfide-isomerase (512 aa).

Positions 1–24 are cleaved as a signal peptide; sequence MAKNVAIFGLLFSLLLLVPSQIFA. A Thioredoxin 1 domain is found at 25–144; the sequence is EESSTDAKEF…IVEYLKKQSG (120 aa). Residues Cys-62 and Cys-65 each act as nucleophile in the active site. Cys-62 and Cys-65 are joined by a disulfide. N-linked (GlcNAc...) asparagine glycosylation occurs at Asn-278. The region spanning 357-485 is the Thioredoxin 2 domain; that stretch reads YKDGKVEPFV…IIEFIEKNKD (129 aa). Catalysis depends on nucleophile residues Cys-407 and Cys-410. A disulfide bond links Cys-407 and Cys-410. Residues 487–496 show a composition bias toward basic and acidic residues; the sequence is TGAAHQEVEQ. Residues 487 to 512 are disordered; the sequence is TGAAHQEVEQPKAAAQPEAEQPKDEL. Residues 509–512 carry the Prevents secretion from ER motif; it reads KDEL.

This sequence belongs to the protein disulfide isomerase family.

It localises to the endoplasmic reticulum lumen. It catalyses the reaction Catalyzes the rearrangement of -S-S- bonds in proteins.. In terms of biological role, participates in the folding of proteins containing disulfide bonds, may be involved in glycosylation, prolyl hydroxylation and triglyceride transfer. The sequence is that of Protein disulfide-isomerase (PDI) from Medicago sativa (Alfalfa).